The chain runs to 172 residues: Disulfide bond formation protein B (172 aa).

Residues 1–11 (MNPFRWGFRAQ) are Cytoplasmic-facing. Residues 12–28 (FLLGFLACAGLLAYAIY) traverse the membrane as a helical segment. Residues 29–46 (VQLHLGLEPCPLCIFQRI) lie on the Periplasmic side of the membrane. A disulfide bridge links cysteine 38 with cysteine 41. The helical transmembrane segment at 47-63 (AFATLALLFLLGALHGP) threads the bilayer. Residues 64–70 (RGAGGRK) are Cytoplasmic-facing. Residues 71 to 88 (AYGVLAFIAAGVGMGIAA) form a helical membrane-spanning segment. The Periplasmic segment spans residues 89–145 (RHVWVQIRPKDMMSSCGPPLSFLSETMGPFEVFRTVLTGTGDCGNIDWRFLGLSMPM). The cysteines at positions 104 and 131 are disulfide-linked. A helical membrane pass occupies residues 146–164 (WSMVWFVGLALWALYAGFK). At 165 to 172 (HRGPRKLF) the chain is on the cytoplasmic side.

The protein belongs to the DsbB family.

It localises to the cell inner membrane. Its function is as follows. Required for disulfide bond formation in some periplasmic proteins. Acts by oxidizing the DsbA protein. The protein is Disulfide bond formation protein B of Xanthomonas campestris pv. campestris (strain 8004).